We begin with the raw amino-acid sequence, 566 residues long: Urease subunit alpha (566 aa).

In terms of domain architecture, Urease spans Gly-128 to Phe-566. 3 residues coordinate Ni(2+): His-133, His-135, and Lys-216. The residue at position 216 (Lys-216) is an N6-carboxylysine. A substrate-binding site is contributed by His-218. Ni(2+) contacts are provided by His-245 and His-271. Residue His-319 is the Proton donor of the active site. Asp-359 is a binding site for Ni(2+).

Belongs to the metallo-dependent hydrolases superfamily. Urease alpha subunit family. May form a heterohexamer of 3 UreC (alpha) and 3 UreAB (gamma/beta) subunits. May also form a heterotrimer of UreA (gamma), UreB (beta) and UreC (alpha) subunits. Three heterotrimers associate to form the active enzyme. The cofactor is Ni cation. Carboxylation allows a single lysine to coordinate two nickel ions.

It localises to the cytoplasm. It carries out the reaction urea + 2 H2O + H(+) = hydrogencarbonate + 2 NH4(+). It functions in the pathway nitrogen metabolism; urea degradation; CO(2) and NH(3) from urea (urease route): step 1/1. This chain is Urease subunit alpha, found in Pseudomonas savastanoi pv. phaseolicola (strain 1448A / Race 6) (Pseudomonas syringae pv. phaseolicola (strain 1448A / Race 6)).